The primary structure comprises 2598 residues: Partially reducing polyketide synthase men1 (2598 aa).

The 429-residue stretch at 7-435 (SQSIAIVGLS…GSNAHAILDD (429 aa)) folds into the Ketosynthase family 3 (KS3) domain. Active-site for beta-ketoacyl synthase activity residues include Cys181, His316, and His358. Over residues 450-459 (GKSHHHHHQH) the composition is skewed to basic residues. Disordered regions lie at residues 450-490 (GKSH…NGTT) and 537-557 (AEKQ…DPEK). Residues 474–490 (VNGTSEVNGTSGVNGTT) show a composition bias toward low complexity. The region spanning 611–915 (YVFTGQGAQW…RGPVTQILQS (305 aa)) is the Malonyl-CoA:ACP transacylase (MAT) domain. The segment at 1008–1151 (LGLIGAPMPN…GSVAVEFGAL (144 aa)) is N-terminal hotdog fold. Residues 1008 to 1325 (LGLIGAPMPN…CVEMPSASGM (318 aa)) enclose the PKS/mFAS DH domain. Residues 1009–1323 (GLIGAPMPNF…LVCVEMPSAS (315 aa)) are dehydratase (DH) domain. The segment at 1169–1325 (TISQEVDVFY…CVEMPSASGM (157 aa)) is C-terminal hotdog fold. The 312-residue stretch at 1886 to 2197 (GMLNTLCFEI…ARSRQDKIVI (312 aa)) folds into the Enoyl reductase (ER) domain. The region spanning 2222-2399 (TYLIAGGLGG…AATIDLGIVK (178 aa)) is the Ketoreductase (KR) domain. The Carrier domain maps to 2510 to 2587 (EAARLVSAAV…AFASDLAKKG (78 aa)). Position 2547 is an O-(pantetheine 4'-phosphoryl)serine (Ser2547).

Pantetheine 4'-phosphate serves as cofactor.

It functions in the pathway secondary metabolite biosynthesis. In terms of biological role, partially reducing polyketide synthase; part of the gene cluster that mediates the biosynthesis of menisporopsin A, a bioactive macrocyclic polylactone. The biosynthesis of menisporopsin A is performed by a reducing (man1) and a non-reducing (men2) polyketide synthase that catalyze the formation of each menisporopsin A subunits, while the esterification and cyclolactonization activities are probably peformed by the unusual thioesterase domain of men2. First, a reduced diketide intermediate, 3-hydroxybutyryl-S-ACP is produced by men1 and transferred to men2; this is followed by a second reduced diketide which is further elongated using 3 units of malonyl-coA to form a reduced pentaketide. The cyclization of this intermediate by the PT domain forms the second subunit, 2,4-dihydroxy-6-(2-hydroxy-n-propyl)benzoyl-S-ACP. The TE domain of men2 then esterifies the secondary hydroxyl group on the side chain of the second subunit with the acyl-TE of the first subunit to form the first ester intermediate. This process occurs iteratively to form a linear tetraester intermediate. The final subunit is formed by a similar process, except that an extra malonyl-CoA is required in an additional elongation step to form a reduced hexaketide intermediate, and the carbonyl group next to the secondary hydroxyl group is reduced by a trans-acting ketoreductase. Again, the PT domain catalyzes cyclization to form the largest subunit, 2,4-dihydroxy-6-(2,4-dihydroxy-n-pentyl) benzoyl-S-ACP. Then the linear pentaester intermediate is formed. In this step, if the intermediate transfer rate is slow, intra- molecular cyclization involving the secondary hydroxyl group of the pentaester intermediate may occur to form menisporopsin B. Alternatively, transfer of the pentaester intermediate to the TE domain would allow cyclolactonization to be catalyzed by the TE to form menisporopsin A. This chain is Partially reducing polyketide synthase men1, found in Menisporopsis theobromae.